The primary structure comprises 419 residues: UDP-N-acetylglucosamine 1-carboxyvinyltransferase 2 (419 aa).

Residue 22 to 23 (KN) participates in phosphoenolpyruvate binding. Arg92 contacts UDP-N-acetyl-alpha-D-glucosamine. Cys116 acts as the Proton donor in catalysis. Position 116 is a 2-(S-cysteinyl)pyruvic acid O-phosphothioketal (Cys116). UDP-N-acetyl-alpha-D-glucosamine-binding positions include 121–125 (RPIDL), Asp306, and Ile328.

The protein belongs to the EPSP synthase family. MurA subfamily.

It localises to the cytoplasm. The catalysed reaction is phosphoenolpyruvate + UDP-N-acetyl-alpha-D-glucosamine = UDP-N-acetyl-3-O-(1-carboxyvinyl)-alpha-D-glucosamine + phosphate. It functions in the pathway cell wall biogenesis; peptidoglycan biosynthesis. In terms of biological role, cell wall formation. Adds enolpyruvyl to UDP-N-acetylglucosamine. The sequence is that of UDP-N-acetylglucosamine 1-carboxyvinyltransferase 2 from Streptococcus pyogenes serotype M1.